Here is a 71-residue protein sequence, read N- to C-terminus: Immune-induced peptide 18 (71 aa).

An N-terminal signal peptide occupies residues 1 to 24 (MKLIALCCLLLLGLLGFLAAPGVA). Residues 25–26 (SP) constitute a propeptide that is removed on maturation. The disordered stretch occupies residues 26–71 (PSRHTGPGNGSGSGAGSGNPFRSPSSQQRPLYYDAPIGKPSKTMYA). Gly residues predominate over residues 32 to 42 (PGNGSGSGAGS).

In terms of tissue distribution, hemolymph (at protein level).

It localises to the secreted. This is Immune-induced peptide 18 (IM18) from Drosophila melanogaster (Fruit fly).